Here is a 1187-residue protein sequence, read N- to C-terminus: MKTKFDRLGTGKRSRPSPNNIDFNDQSATFKRNKKNSRQPSFKVGLSYNSLLDDCDDENETEEIFEGRGLQFFDKDDNFSITADDTQVTSKLFDHDLEQTPDEEAKKPKKVTIRKSAKKCLSTTILPDSFRGVFKFTEFNKMQSEAFPSIYESNENCIISSPTGSGKTVLFELAILRLIKETNSDTNNTKIIYIAPTKSLCYEMYKNWFPSFVNLSVGMLTSDTSFLETEKAKKCNIIITTPEKWDLLTRRWSDYSRLFELVKLVLVDEIHTIKEKRGASLEVILTRMNTMCQNIRFVALSATVPNIEDLALWLKTNNELPANILSFDESYRQVQLTKFVYGYSFNCKNDFQKDAIYNSKLIEIIEKHADNRPVLIFCPTRASTISTAKFLLNNHIFSKSKKRCNHNPSDKILNECMQQGIAFHHAGISLEDRTAVEKEFLAGSINILCSTSTLAVGVNLPAYLVIIKGTKSWNSSEIQEYSDLDVLQMIGRAGRPQFETHGCAVIMTDSKMKQTYENLIHGTDVLESSLHLNLIEHLAAETSLETVYSIETAVNWLRNTFFYVRFGKNPAAYQEVNRYVSFHSVEDSQINQFCQYLLDTLVKVKIIDISNGEYKSTAYGNAMTRHYISFESMKQFINAKKFLSLQGILNLLATSEEFSVMRVRHNEKKLFKEINLSPLLKYPFLTEKKQSQIIDRVSQKVSLLIQYELGGLEFPSYEGASKLHQTLVQDKFLVFRHCFRLLKCMVDTFIEKSDGTSLKNTLFLLRSLNGHCWENTPMVLRQLKTIGLVSVRRLIRHGITNLEEMGHLSDTQIEYYLNLKIGNGIKIKNDISLLPCLNIRTKLENCKIENEELWLTFKVEISATFKSSIWHGQHLSLDIETEKSSGELIDFRRLQVNKLQSPRGFRISAKISPKLEKIEFSIHCQEIAGLGKTIVYSTDHLASQFSAKTPNIRKDLNSLEKCLFYESSSDGEVGKTSRVSHKDGLEESLSSDDSILDYLNERKKSSKAVESAAVIHPEAHSSSHFSNGRQVRSNGNYECFHSCKDKTQCRHLCCKEGIPVKYIKEKGPSSIKPVSKPDQIRQPLLAKNINTTPHLEKRLNSKPKQWQEENTDIATVHTLPSKIYNLSQQMSSMEAGEQVLKSGPENCPEIIPIDLESSDSYSSNTAASSISDPNGDLDFLGSDIEFE.

The interval 1 to 41 (MKTKFDRLGTGKRSRPSPNNIDFNDQSATFKRNKKNSRQPS) is disordered. A compositionally biased stretch (polar residues) spans 16–30 (PSPNNIDFNDQSATF). Positions 148–322 (PSIYESNENC…WLKTNNELPA (175 aa)) constitute a Helicase ATP-binding domain. 161-168 (SPTGSGKT) serves as a coordination point for ATP. The DEIH box motif lies at 268–271 (DEIH). The Helicase C-terminal domain maps to 360–542 (KLIEIIEKHA…NLIEHLAAET (183 aa)). The region spanning 616 to 922 (STAYGNAMTR…PKLEKIEFSI (307 aa)) is the SEC63 domain. The C4-type zinc finger occupies 1039 to 1054 (CFHSCKDKTQCRHLCC). A disordered region spans residues 1146–1187 (NCPEIIPIDLESSDSYSSNTAASSISDPNGDLDFLGSDIEFE). The span at 1158–1171 (SDSYSSNTAASSIS) shows a compositional bias: low complexity.

Belongs to the helicase family. SKI2 subfamily. As to quaternary structure, oligomerizes. A divalent metal cation serves as cofactor. Requires Zn(2+) as cofactor.

The protein resides in the nucleus. It catalyses the reaction Couples ATP hydrolysis with the unwinding of duplex DNA by translocating in the 3'-5' direction.. It carries out the reaction ATP + H2O = ADP + phosphate + H(+). Its function is as follows. DNA-dependent ATPase and 3'-5' DNA helicase. Required in the control of double strand break transition and crossover during meiosis. ATPase is slightly better stimulated by single-stranded (ss) than double-stranded (ds)DNA. Unwinds Holliday junction (HJ) DNA to Y-DNA and to ssDNA. Efficient unwinding requires 6 nucleotides of 3'-ssDNA; seems to initiate unwinding from blunt ends when they open slightly. Binds HJ, dsDNA, ssDNA and 3'- and 5-overhang DNA. This is ATP-dependent DNA helicase MER3 from Saccharomyces cerevisiae (strain ATCC 204508 / S288c) (Baker's yeast).